A 244-amino-acid polypeptide reads, in one-letter code: Small ribosomal subunit protein eS6 (244 aa).

The disordered stretch occupies residues 185–244 (RLQRKRHMRAVKRRRYAKQREEEATYAKLLAKRKKEEREAHAKRRSSARESSLRESKSKA). The span at 186–201 (LQRKRHMRAVKRRRYA) shows a compositional bias: basic residues. The span at 231-244 (SARESSLRESKSKA) shows a compositional bias: basic and acidic residues.

It belongs to the eukaryotic ribosomal protein eS6 family. Post-translationally, ribosomal protein S6 is the major substrate of protein kinases in eukaryote ribosomes.

In terms of biological role, component of the 40S small ribosomal subunit. Plays an important role in controlling cell growth and proliferation through the selective translation of particular classes of mRNA. The protein is Small ribosomal subunit protein eS6 (RPS6) of Branchiostoma floridae (Florida lancelet).